We begin with the raw amino-acid sequence, 342 residues long: Anthranilate phosphoribosyltransferase (342 aa).

5-phospho-alpha-D-ribose 1-diphosphate-binding positions include G81, 84 to 85 (GD), T89, 91 to 94 (NVST), 109 to 117 (KHGNRAASS), and A121. G81 serves as a coordination point for anthranilate. Mg(2+) is bound at residue S93. Position 112 (N112) interacts with anthranilate. R167 serves as a coordination point for anthranilate. Mg(2+)-binding residues include D226 and E227.

The protein belongs to the anthranilate phosphoribosyltransferase family. Homodimer. Mg(2+) serves as cofactor.

The catalysed reaction is N-(5-phospho-beta-D-ribosyl)anthranilate + diphosphate = 5-phospho-alpha-D-ribose 1-diphosphate + anthranilate. It functions in the pathway amino-acid biosynthesis; L-tryptophan biosynthesis; L-tryptophan from chorismate: step 2/5. Catalyzes the transfer of the phosphoribosyl group of 5-phosphorylribose-1-pyrophosphate (PRPP) to anthranilate to yield N-(5'-phosphoribosyl)-anthranilate (PRA). This is Anthranilate phosphoribosyltransferase from Beijerinckia indica subsp. indica (strain ATCC 9039 / DSM 1715 / NCIMB 8712).